We begin with the raw amino-acid sequence, 215 residues long: Protein HP-25 homolog 2 (215 aa).

The first 30 residues, 1 to 30, serve as a signal peptide directing secretion; it reads MPGRGGQSLSMVCVDVWILALSVLSVMADA. Residues 35 to 79 form a disordered region; sequence VTESCDSQGPPGLPGPPGLPGPPGPPGPPGPPGLRGPTGIPGDIE. In terms of domain architecture, Collagen-like spans 43–76; the sequence is GPPGLPGPPGLPGPPGPPGPPGPPGLRGPTGIPG. The segment covering 45–68 has biased composition (pro residues); that stretch reads PGLPGPPGLPGPPGPPGPPGPPGL. Positions 82-215 constitute a C1q domain; the sequence is LSPPKSAFAV…GYLLYGNYPG (134 aa).

The protein localises to the secreted. This Bos taurus (Bovine) protein is Protein HP-25 homolog 2.